The chain runs to 253 residues: MRKPIIAGNWKMNKTVKEAKDFINELPTLPDTKEVESVICAPTIQLDALVTLVNDGKAKGLQIGAQNAYFEDNGAFTGETSPVALADLGVKYVVIGHSERREIFHETDEEINKKAHAIFNHGMTPIVCVGETDEERESGKANEVVGNQVKKAVEGLSEAQLQQLVIAYEPIWAIGTGKSSTAKDANEMCAFVRQTVAELSSQTVADATRIQYGGSVKPNNIKEYMAESDIDGALVGGASLKVDDFVQLLEGAK.

A substrate-binding site is contributed by 9–11 (NWK). Catalysis depends on His97, which acts as the Electrophile. Glu169 (proton acceptor) is an active-site residue. Substrate is bound by residues Gly175, Ser215, and 236 to 237 (GG).

Belongs to the triosephosphate isomerase family. Homodimer.

The protein localises to the cytoplasm. It catalyses the reaction D-glyceraldehyde 3-phosphate = dihydroxyacetone phosphate. Its pathway is carbohydrate biosynthesis; gluconeogenesis. The protein operates within carbohydrate degradation; glycolysis; D-glyceraldehyde 3-phosphate from glycerone phosphate: step 1/1. In terms of biological role, involved in the gluconeogenesis. Catalyzes stereospecifically the conversion of dihydroxyacetone phosphate (DHAP) to D-glyceraldehyde-3-phosphate (G3P). The protein is Triosephosphate isomerase of Staphylococcus saprophyticus subsp. saprophyticus (strain ATCC 15305 / DSM 20229 / NCIMB 8711 / NCTC 7292 / S-41).